Reading from the N-terminus, the 260-residue chain is Ribosomal RNA small subunit methyltransferase J (260 aa).

Residues 125–126 (ER) and Asp179 each bind S-adenosyl-L-methionine.

The protein belongs to the methyltransferase superfamily. RsmJ family.

The protein localises to the cytoplasm. It catalyses the reaction guanosine(1516) in 16S rRNA + S-adenosyl-L-methionine = N(2)-methylguanosine(1516) in 16S rRNA + S-adenosyl-L-homocysteine + H(+). Functionally, specifically methylates the guanosine in position 1516 of 16S rRNA. This chain is Ribosomal RNA small subunit methyltransferase J, found in Pseudomonas fluorescens (strain ATCC BAA-477 / NRRL B-23932 / Pf-5).